An 874-amino-acid chain; its full sequence is Alanine--tRNA ligase (874 aa).

Zn(2+) contacts are provided by histidine 563, histidine 567, cysteine 665, and histidine 669.

Belongs to the class-II aminoacyl-tRNA synthetase family. The cofactor is Zn(2+).

It is found in the cytoplasm. The enzyme catalyses tRNA(Ala) + L-alanine + ATP = L-alanyl-tRNA(Ala) + AMP + diphosphate. Catalyzes the attachment of alanine to tRNA(Ala) in a two-step reaction: alanine is first activated by ATP to form Ala-AMP and then transferred to the acceptor end of tRNA(Ala). Also edits incorrectly charged Ser-tRNA(Ala) and Gly-tRNA(Ala) via its editing domain. The protein is Alanine--tRNA ligase of Actinobacillus pleuropneumoniae serotype 5b (strain L20).